A 619-amino-acid chain; its full sequence is Kinesin light chain 4 (619 aa).

Ser2 bears the N-acetylserine mark. Residues 55-88 (QQGGHEEGLVHEKARQLRRSMENIELGLSEAQVM) form a TPR 1 repeat. The stretch at 65 to 155 (HEKARQLRRS…HLEFLRQLRQ (91 aa)) forms a coiled coil. Positions 156–175 (YDEDGHGMEEKEGEATKDSL) are enriched in basic and acidic residues. The interval 156-199 (YDEDGHGMEEKEGEATKDSLDDLFPNEEEEDSGNDLSRGQGAAA) is disordered. Ser174 carries the phosphoserine modification. Residues 179–188 (FPNEEEEDSG) show a composition bias toward acidic residues. TPR repeat units follow at residues 211 to 244 (LRTLHNLVIQYAAQGRYEVAVPLCKQALEDLERT), 253 to 286 (ATMLNILALVYRDQNKYKEAAHLLNDALSIREST), 295 to 328 (AATLNNLAVLYGKRGKYKEAEPLCQRALEIREKV), 337 to 370 (AKQLNNLALLCQNQGKYEAVERYYQRALAIYESQ), and 379 to 412 (ARTKNNLASCYLKQGKYSEAEALYKEILTCAHVQ). Position 460 is a phosphoserine (Ser460). The TPR 7 repeat unit spans residues 464–497 (NTTLKNLGALYRRQGKLEAAETLEECALRSRKQG). Ser565, Ser566, and Ser590 each carry phosphoserine. Positions 571 to 619 (RKLQGTEPRPSSSSMKRAASLNYLNQPNAAPLQVSRGLSASTVDLSSSS) are disordered. Residues 609–619 (SASTVDLSSSS) are compositionally biased toward low complexity. At Thr612 the chain carries Phosphothreonine.

The protein belongs to the kinesin light chain family. Oligomeric complex composed of two heavy chains and two light chains.

It localises to the cytoplasm. The protein localises to the cytoskeleton. Functionally, kinesin is a microtubule-associated force-producing protein that may play a role in organelle transport. The light chain may function in coupling of cargo to the heavy chain or in the modulation of its ATPase activity. The sequence is that of Kinesin light chain 4 (Klc4) from Mus musculus (Mouse).